The sequence spans 609 residues: Tyrosine-protein kinase transforming protein Fes (609 aa).

Disordered stretches follow at residues 1-20 and 152-208; these read AARADGTMGFSSELCSPQGH and RDSA…GGRT. The 167-residue stretch at 8–174 folds into the F-BAR; degenerate domain; sequence MGFSSELCSP…SKDKDRDKAK (167 aa). Composition is skewed to basic and acidic residues over residues 160-175 and 190-206; these read KYQEASKDKDRDKAKL and QDDRHSTSSSEQEREGG. An SH2 domain is found at 247-336; the sequence is WYHGALPRAE…KSGIVLNRAV (90 aa). The 262-residue stretch at 348–609 folds into the Protein kinase domain; that stretch reads LVLGEQIGRG…ELQSIRKRHR (262 aa). ATP-binding positions include 354 to 362 and Lys377; that span reads IGRGNFGEV. Catalysis depends on Asp470, which acts as the Proton acceptor. Tyr500 is subject to Phosphotyrosine; by autocatalysis.

This sequence belongs to the protein kinase superfamily. Tyr protein kinase family. Fes/fps subfamily.

It carries out the reaction L-tyrosyl-[protein] + ATP = O-phospho-L-tyrosyl-[protein] + ADP + H(+). In Felidae (cat family), this protein is Tyrosine-protein kinase transforming protein Fes (V-FES).